We begin with the raw amino-acid sequence, 597 residues long: uncharacterized protein (597 aa).

Disordered regions lie at residues 165 to 197 (NSRAVPPPAPPNPPKMEKHMSHDTSGRGSIFSK) and 278 to 344 (ERSS…RGTL). Over residues 169–178 (VPPPAPPNPP) the composition is skewed to pro residues. Over residues 179–189 (KMEKHMSHDTS) the composition is skewed to basic and acidic residues. A compositionally biased stretch (low complexity) spans 293 to 313 (STEVSITSSSPSPSSSSSTST). The SAM domain occupies 402–465 (WSLDDVLLWL…LDDLSKIIEN (64 aa)). The tract at residues 576-597 (EESQQKESSSSGISSSPQTPTE) is disordered. A compositionally biased stretch (low complexity) spans 581 to 597 (KESSSSGISSSPQTPTE).

This is an uncharacterized protein from Caenorhabditis elegans.